The sequence spans 295 residues: Defective in cullin neddylation protein AAR3 (295 aa).

In terms of domain architecture, DCUN1 spans 1 to 180 (MDSSPVSARF…LIDDFVEHMY (180 aa)). Residues 214 to 221 (YRRPHTGL) carry the Nuclear localization signal motif. Residues 214-251 (YRRPHTGLRNIPGLKRKTSKKNDEEEEDEDEEVLETQN) form a disordered region. Over residues 237–247 (EEEEDEDEEVL) the composition is skewed to acidic residues.

Its subcellular location is the nucleus. Its function is as follows. May contribute to the neddylation of all cullins by transferring NEDD8 from N-terminally acetylated NEDD8-conjugating E2s enzyme to different cullin C-terminal domain-RBX complexes; neddylation of cullins play an essential role in the regulation of SCF-type complexes activity. Regulates responses to the synthetic auxin 2,4-dichlorophenoxyacetic acid (2,4-D) in roots, probably by modulating the SCF(TIR1) ubiquitin E3 ligase complex-mediated proteolysis. In Arabidopsis thaliana (Mouse-ear cress), this protein is Defective in cullin neddylation protein AAR3.